The chain runs to 332 residues: 3-dehydroquinate synthase (332 aa).

Residues 55–60, 89–93, 113–114, lysine 126, lysine 134, and 152–155 each bind NAD(+); these read DGEEYK, GVITD, TT, and TLST. The Zn(2+) site is built by glutamate 167, histidine 226, and histidine 242.

It belongs to the sugar phosphate cyclases superfamily. Dehydroquinate synthase family. The cofactor is NAD(+). Co(2+) serves as cofactor. Requires Zn(2+) as cofactor.

The protein localises to the cytoplasm. The enzyme catalyses 7-phospho-2-dehydro-3-deoxy-D-arabino-heptonate = 3-dehydroquinate + phosphate. Its pathway is metabolic intermediate biosynthesis; chorismate biosynthesis; chorismate from D-erythrose 4-phosphate and phosphoenolpyruvate: step 2/7. In terms of biological role, catalyzes the conversion of 3-deoxy-D-arabino-heptulosonate 7-phosphate (DAHP) to dehydroquinate (DHQ). The sequence is that of 3-dehydroquinate synthase from Pyrococcus abyssi (strain GE5 / Orsay).